The chain runs to 203 residues: MKLLHIDSSILGDNSASRQLSHSVVEAWKAAHPATVVTYRDLANDAISHFSAATLVAAGTAAELRDAAQKHEAQLSAQALAEFKAADTVVVAAPMYNFTIPTQLKAWIDRIAVAGETFRYTEAGPQGLCGGKKVIVVSTSGGLHVGQATGVAHEDYLKVLFGFFGITDVEFVRAHGLAYGEEVRSKAMSDAQAQISQQLFAAA.

FMN contacts are provided by residues S9, 15 to 17 (SAS), 95 to 98 (MYNF), and 139 to 142 (TSGG).

Belongs to the azoreductase type 1 family. Homodimer. FMN is required as a cofactor.

The catalysed reaction is 2 a quinone + NADH + H(+) = 2 a 1,4-benzosemiquinone + NAD(+). It catalyses the reaction N,N-dimethyl-1,4-phenylenediamine + anthranilate + 2 NAD(+) = 2-(4-dimethylaminophenyl)diazenylbenzoate + 2 NADH + 2 H(+). Its function is as follows. Quinone reductase that provides resistance to thiol-specific stress caused by electrophilic quinones. Also exhibits azoreductase activity. Catalyzes the reductive cleavage of the azo bond in aromatic azo compounds to the corresponding amines. This is FMN-dependent NADH:quinone oxidoreductase 5 from Pseudomonas fluorescens (strain ATCC BAA-477 / NRRL B-23932 / Pf-5).